Here is a 116-residue protein sequence, read N- to C-terminus: Ribosome-binding factor A (116 aa).

The protein belongs to the RbfA family. Monomer. Binds 30S ribosomal subunits, but not 50S ribosomal subunits or 70S ribosomes.

Its subcellular location is the cytoplasm. Its function is as follows. One of several proteins that assist in the late maturation steps of the functional core of the 30S ribosomal subunit. Associates with free 30S ribosomal subunits (but not with 30S subunits that are part of 70S ribosomes or polysomes). Required for efficient processing of 16S rRNA. May interact with the 5'-terminal helix region of 16S rRNA. In Streptococcus mutans serotype c (strain ATCC 700610 / UA159), this protein is Ribosome-binding factor A.